Consider the following 227-residue polypeptide: Cytochrome c oxidase subunit 2 (227 aa).

The Mitochondrial intermembrane portion of the chain corresponds to 1–14 (MAYPVQLGFQDAAS). Residues 15 to 45 (PIMEELLYFHDHTLMIMFLISSLVLYIISLM) traverse the membrane as a helical segment. At 46–59 (LTTELIHTSTMDAQ) the chain is on the mitochondrial matrix side. Residues 60 to 87 (EVETVWTILPAVILILIALPSLRILYMM) form a helical membrane-spanning segment. Residues 88–227 (DEISTPSLTL…HFEEWLLSML (140 aa)) are Mitochondrial intermembrane-facing. 6 residues coordinate Cu cation: His161, Cys196, Glu198, Cys200, His204, and Met207. A Mg(2+)-binding site is contributed by Glu198.

Belongs to the cytochrome c oxidase subunit 2 family. Component of the cytochrome c oxidase (complex IV, CIV), a multisubunit enzyme composed of 14 subunits. The complex is composed of a catalytic core of 3 subunits MT-CO1, MT-CO2 and MT-CO3, encoded in the mitochondrial DNA, and 11 supernumerary subunits COX4I, COX5A, COX5B, COX6A, COX6B, COX6C, COX7A, COX7B, COX7C, COX8 and NDUFA4, which are encoded in the nuclear genome. The complex exists as a monomer or a dimer and forms supercomplexes (SCs) in the inner mitochondrial membrane with NADH-ubiquinone oxidoreductase (complex I, CI) and ubiquinol-cytochrome c oxidoreductase (cytochrome b-c1 complex, complex III, CIII), resulting in different assemblies (supercomplex SCI(1)III(2)IV(1) and megacomplex MCI(2)III(2)IV(2)). Found in a complex with TMEM177, COA6, COX18, COX20, SCO1 and SCO2. Interacts with TMEM177 in a COX20-dependent manner. Interacts with COX20. Interacts with COX16. Cu cation is required as a cofactor.

The protein localises to the mitochondrion inner membrane. The catalysed reaction is 4 Fe(II)-[cytochrome c] + O2 + 8 H(+)(in) = 4 Fe(III)-[cytochrome c] + 2 H2O + 4 H(+)(out). Its function is as follows. Component of the cytochrome c oxidase, the last enzyme in the mitochondrial electron transport chain which drives oxidative phosphorylation. The respiratory chain contains 3 multisubunit complexes succinate dehydrogenase (complex II, CII), ubiquinol-cytochrome c oxidoreductase (cytochrome b-c1 complex, complex III, CIII) and cytochrome c oxidase (complex IV, CIV), that cooperate to transfer electrons derived from NADH and succinate to molecular oxygen, creating an electrochemical gradient over the inner membrane that drives transmembrane transport and the ATP synthase. Cytochrome c oxidase is the component of the respiratory chain that catalyzes the reduction of oxygen to water. Electrons originating from reduced cytochrome c in the intermembrane space (IMS) are transferred via the dinuclear copper A center (CU(A)) of subunit 2 and heme A of subunit 1 to the active site in subunit 1, a binuclear center (BNC) formed by heme A3 and copper B (CU(B)). The BNC reduces molecular oxygen to 2 water molecules using 4 electrons from cytochrome c in the IMS and 4 protons from the mitochondrial matrix. In Eulemur macaco (Black lemur), this protein is Cytochrome c oxidase subunit 2 (MT-CO2).